A 158-amino-acid polypeptide reads, in one-letter code: Regulator of sigma D (158 aa).

This sequence belongs to the Rsd/AlgQ family. As to quaternary structure, interacts with RpoD.

The protein localises to the cytoplasm. Binds RpoD and negatively regulates RpoD-mediated transcription activation by preventing the interaction between the primary sigma factor RpoD with the catalytic core of the RNA polymerase and with promoter DNA. May be involved in replacement of the RNA polymerase sigma subunit from RpoD to RpoS during the transition from exponential growth to the stationary phase. This chain is Regulator of sigma D, found in Shigella dysenteriae serotype 1 (strain Sd197).